An 893-amino-acid polypeptide reads, in one-letter code: Translation initiation factor IF-2 (893 aa).

The tract at residues 1 to 266 (MVDTKNPGDK…AKPAPSKQRG (266 aa)) is disordered. Over residues 59–70 (PADAPTAAAAAP) the composition is skewed to low complexity. A compositionally biased stretch (pro residues) spans 71 to 92 (APAPAPVPSAAPRPAAPPPPSR). Residues 93–104 (PQQSRSQSPSRS) show a composition bias toward low complexity. 2 stretches are compositionally biased toward basic and acidic residues: residues 128–148 (ARVR…RRNS) and 155–196 (AERE…EAKR). Low complexity predominate over residues 197–226 (PAAAATPAKSATPAARPTGAPAVRAPGVAA). The tr-type G domain occupies 389-560 (PRSPVVTVMG…ALQAELLDLK (172 aa)). Residues 398-405 (GHVDHGKT) are G1. Position 398 to 405 (398 to 405 (GHVDHGKT)) interacts with GTP. Positions 423 to 427 (GITQH) are G2. The interval 446–449 (DTPG) is G3. GTP-binding positions include 446–450 (DTPGH) and 500–503 (NKID). The interval 500-503 (NKID) is G4. Positions 536-538 (SAK) are G5.

It belongs to the TRAFAC class translation factor GTPase superfamily. Classic translation factor GTPase family. IF-2 subfamily.

The protein resides in the cytoplasm. One of the essential components for the initiation of protein synthesis. Protects formylmethionyl-tRNA from spontaneous hydrolysis and promotes its binding to the 30S ribosomal subunits. Also involved in the hydrolysis of GTP during the formation of the 70S ribosomal complex. In Rhodopseudomonas palustris (strain BisA53), this protein is Translation initiation factor IF-2.